A 792-amino-acid chain; its full sequence is Cullin-4 (792 aa).

A compositionally biased stretch (polar residues) spans 1–10; that stretch reads MSLPTKRSTF. Residues 1 to 43 form a disordered region; that stretch reads MSLPTKRSTFSAASASDDSSYSSPPMKKAKNDLHHSPQHPNTA. Residues 11–23 show a composition bias toward low complexity; the sequence is SAASASDDSSYSS. In terms of domain architecture, Cullin neddylation spans 724–784; sequence DRQYQIDAAI…REYLEREKSN (61 aa). Lysine 738 participates in a covalent cross-link: Glycyl lysine isopeptide (Lys-Gly) (interchain with G-Cter in NEDD8).

This sequence belongs to the cullin family. In terms of assembly, interacts with COP10, CSN3, CSN4, CSN5, CSN8, DDB1A, DDB1B, DDB2, DET1 and RBX1. Neddylated (rubylated). Deneddylated via its interaction with the COP9 signalosome (CSN) complex. Ubiquitous.

It is found in the nucleus. Its pathway is protein modification; protein ubiquitination. Component of the CUL4-RBX1-CDD (COP10-DDB1a-DET1) E3 ubiquitin-protein ligase complex which mediates the ubiquitination and subsequent proteasomal degradation of target proteins. Participates in the CDD complex to light-mediated control of development. May repress photomorphogenesis through enhancing COP1 E3 ubiquitin-protein ligase activity. Acts together with the CUL4-DDB1-COP1-SPA E3 ubiquitin-protein ligase complexes in the repression of photomorphogenesis and flowering time. Component ot the CUL4-RBX1-DDB1-PRL1 E3 ubiquitin-protein ligase complex which mediates ubiquitination and subsequent degradation of AKIN10. Component of the CUL4-RBX1-DDB1-DWA1/DWA2 E3 ubiquitin-protein ligase complex that acts as a negative regulator in abscisic acid (ABA) signaling and may target ABI5 for degradation. In Arabidopsis thaliana (Mouse-ear cress), this protein is Cullin-4 (CUL4).